The chain runs to 143 residues: MSRLACISSLFILCAIGSEAVFTQSAGVKGVLMCGDKPLANTKVKLYDDDTGPDLDDLLAEGTTDSLGQFLLTGHTSEVMTIDPKLNIYHDCDDGLKPCQRRVTFNIPKSFVSSGENPKTFFNIGTINMQIEFESESRDCLHR.

An N-terminal signal peptide occupies residues 1 to 20 (MSRLACISSLFILCAIGSEA).

The protein belongs to the nematode transthyretin-like family. As to expression, expressed in head cells next to and anterior of the first pharyngeal bulb, the pharynx, and the hypodermis.

Its subcellular location is the secreted. Functionally, protects dopaminergic neurons from degeneration caused by oxidative stress. The protein is Transthyretin-like protein 33 of Caenorhabditis elegans.